Consider the following 603-residue polypeptide: Aspartate--tRNA(Asp/Asn) ligase (603 aa).

Glutamate 172 lines the L-aspartate pocket. The aspartate stretch occupies residues 196-199 (QLFK). Position 218 (arginine 218) interacts with L-aspartate. Residues 218–220 (RDE) and glutamine 227 each bind ATP. Histidine 457 is an L-aspartate binding site. Glutamate 491 provides a ligand contact to ATP. Arginine 498 contacts L-aspartate. 543–546 (GLDR) is a binding site for ATP.

The protein belongs to the class-II aminoacyl-tRNA synthetase family. Type 1 subfamily. Homodimer.

The protein localises to the cytoplasm. The enzyme catalyses tRNA(Asx) + L-aspartate + ATP = L-aspartyl-tRNA(Asx) + AMP + diphosphate. Its function is as follows. Aspartyl-tRNA synthetase with relaxed tRNA specificity since it is able to aspartylate not only its cognate tRNA(Asp) but also tRNA(Asn). Reaction proceeds in two steps: L-aspartate is first activated by ATP to form Asp-AMP and then transferred to the acceptor end of tRNA(Asp/Asn). The sequence is that of Aspartate--tRNA(Asp/Asn) ligase from Laribacter hongkongensis (strain HLHK9).